We begin with the raw amino-acid sequence, 450 residues long: Interferon-related developmental regulator 1 (450 aa).

Positions 1-10 are enriched in basic residues; it reads MPKNKKRNTP. Positions 1–46 are disordered; it reads MPKNKKRNTPHRGGSGGGGSGAAATTAATAGGQHRNVQPFSDEDAS. Positions 22-32 are enriched in low complexity; the sequence is AAATTAATAGG.

The protein belongs to the IFRD family. Interacts with PSIP1/LEDGF.

Its function is as follows. Could play a role in regulating gene activity in the proliferative and/or differentiative pathways induced by NGF. May be an autocrine factor that attenuates or amplifies the initial ligand-induced signal. This is Interferon-related developmental regulator 1 (IFRD1) from Sus scrofa (Pig).